Here is a 207-residue protein sequence, read N- to C-terminus: LexA repressor (207 aa).

The segment at residues 28–48 is a DNA-binding region (H-T-H motif); sequence VREIAVAVGLASSSTVHGHLE. Catalysis depends on for autocatalytic cleavage activity residues S129 and K167.

The protein belongs to the peptidase S24 family. As to quaternary structure, homodimer.

It catalyses the reaction Hydrolysis of Ala-|-Gly bond in repressor LexA.. Functionally, represses a number of genes involved in the response to DNA damage (SOS response), including recA and lexA. In the presence of single-stranded DNA, RecA interacts with LexA causing an autocatalytic cleavage which disrupts the DNA-binding part of LexA, leading to derepression of the SOS regulon and eventually DNA repair. In Oceanobacillus iheyensis (strain DSM 14371 / CIP 107618 / JCM 11309 / KCTC 3954 / HTE831), this protein is LexA repressor.